The primary structure comprises 223 residues: Transmembrane protein 126 (223 aa).

Over 1 to 39 (MALSRAKPDELPRDAVVITEDQALKYQWKIITSWDKIGE) the chain is Mitochondrial matrix. A helical transmembrane segment spans residues 40–62 (VWSLRYTPGILSALAAGTGAYIN). Topologically, residues 63-78 (NHYRTKLRLGGHGRLS) are mitochondrial intermembrane. A helical membrane pass occupies residues 79–99 (TYLPIVAVPAIFTMLAHKFFI). The Mitochondrial matrix portion of the chain corresponds to 100–123 (QRPILLNPLGECPVCIQMRSAAFQ). Residues 124–144 (TSLGIVYPTILAPFAAFLFAT) traverse the membrane as a helical segment. Residues 145 to 171 (RCYTYRIPSITENPREVFLLWRKFTRP) are Mitochondrial intermembrane-facing. The helical transmembrane segment at 172-192 (IVPALGTLIGLQALLTMFLTG) threads the bilayer. Residues 193 to 223 (QEDKQNFKLMLRMREIEHQVEEEHLPQRMDF) lie on the Mitochondrial matrix side of the membrane.

Belongs to the TMEM126 family. As to quaternary structure, associates with mitochondrial complex I assembly intermediates during its biogenesis.

Its subcellular location is the mitochondrion membrane. Its function is as follows. As part of the MCIA complex, involved in the assembly of the mitochondrial complex I. The protein is Transmembrane protein 126 of Drosophila melanogaster (Fruit fly).